The sequence spans 482 residues: Reduced viability upon starvation protein 167 (482 aa).

Position 2 is an N-acetylserine (Ser2). The 238-residue stretch at 17 to 254 folds into the BAR domain; that stretch reads FRQKFKMGEQ…YFDLNSDIVE (238 aa). Coiled-coil stretches lie at residues 31-64 and 174-204; these read VYED…NGML and AKDE…LKTQ. Lys242 is covalently cross-linked (Glycyl lysine isopeptide (Lys-Gly) (interchain with G-Cter in ubiquitin)). A phosphoserine; by FUS3 and PHO85 mark is found at Ser299, Ser321, and Ser379. The disordered stretch occupies residues 382–407; the sequence is LTGLGFQQSPQQQQGPPPAYSNPLTS. The SH3 domain occupies 421–482; it reads PGVETVTALY…PGNYVQLNKN (62 aa). Lys481 is covalently cross-linked (Glycyl lysine isopeptide (Lys-Gly) (interchain with G-Cter in ubiquitin)).

As to quaternary structure, binds to actin. Interacts with ABP1, GYL1, GYP5, PCL2 and YBR108W. Post-translationally, phosphorylated redundantly by cyclin-dependent kinase PHO85 in association with PCL1,2-type cyclins or by MAP kinase FUS3. Phosphorylation inhibits interaction with complexes involved in actin cytoskeleton function.

The protein localises to the cytoplasm. It is found in the cytoskeleton. Component of a cytoskeletal structure that is required for the formation of endocytic vesicles at the plasma membrane level. Could be implicated in cytoskeletal reorganization in response to environmental stresses and could act in the budding site selection mechanism. This Saccharomyces cerevisiae (strain ATCC 204508 / S288c) (Baker's yeast) protein is Reduced viability upon starvation protein 167 (RVS167).